The chain runs to 310 residues: Probable cell division protein WhiA (310 aa).

The segment at residues 277–310 is a DNA-binding region (H-T-H motif); that stretch reads SLKELAEQVPDGPISKSGVNHRLKKLHEIAENLR.

It belongs to the WhiA family.

Functionally, involved in cell division and chromosome segregation. In Lactobacillus delbrueckii subsp. bulgaricus (strain ATCC 11842 / DSM 20081 / BCRC 10696 / JCM 1002 / NBRC 13953 / NCIMB 11778 / NCTC 12712 / WDCM 00102 / Lb 14), this protein is Probable cell division protein WhiA.